A 791-amino-acid polypeptide reads, in one-letter code: Endonuclease MutS2 (791 aa).

337–344 (GPNTGGKT) is an ATP binding site. A disordered region spans residues 689–715 (AAQASQKKPEKSVRSSRGLRSSRASSE). A compositionally biased stretch (low complexity) spans 703–713 (SSRGLRSSRAS). The Smr domain maps to 716–791 (LDLRGQRYEE…GTGATIVNLQ (76 aa)).

Belongs to the DNA mismatch repair MutS family. MutS2 subfamily. Homodimer. Binds to stalled ribosomes, contacting rRNA.

Endonuclease that is involved in the suppression of homologous recombination and thus may have a key role in the control of bacterial genetic diversity. Functionally, acts as a ribosome collision sensor, splitting the ribosome into its 2 subunits. Detects stalled/collided 70S ribosomes which it binds and splits by an ATP-hydrolysis driven conformational change. Acts upstream of the ribosome quality control system (RQC), a ribosome-associated complex that mediates the extraction of incompletely synthesized nascent chains from stalled ribosomes and their subsequent degradation. Probably generates substrates for RQC. This chain is Endonuclease MutS2, found in Lactobacillus gasseri (strain ATCC 33323 / DSM 20243 / BCRC 14619 / CIP 102991 / JCM 1131 / KCTC 3163 / NCIMB 11718 / NCTC 13722 / AM63).